A 292-amino-acid polypeptide reads, in one-letter code: ATP synthase gamma chain (292 aa).

It belongs to the ATPase gamma chain family. In terms of assembly, F-type ATPases have 2 components, CF(1) - the catalytic core - and CF(0) - the membrane proton channel. CF(1) has five subunits: alpha(3), beta(3), gamma(1), delta(1), epsilon(1). CF(0) has three main subunits: a, b and c.

It localises to the cell inner membrane. Its function is as follows. Produces ATP from ADP in the presence of a proton gradient across the membrane. The gamma chain is believed to be important in regulating ATPase activity and the flow of protons through the CF(0) complex. The polypeptide is ATP synthase gamma chain (Maridesulfovibrio salexigens (strain ATCC 14822 / DSM 2638 / NCIMB 8403 / VKM B-1763) (Desulfovibrio salexigens)).